The sequence spans 94 residues: MTKSELIERLATQQSHIPAKAVEDAVKEMLEHMASTLAQGERIEIRGFGSFSLHYRAPRTGRNPKTGDKVELEGKYVPHFKPGKELRDRANIYG.

The protein belongs to the bacterial histone-like protein family. As to quaternary structure, heterodimer of an alpha and a beta chain.

This protein is one of the two subunits of integration host factor, a specific DNA-binding protein that functions in genetic recombination as well as in transcriptional and translational control. This is Integration host factor subunit beta from Citrobacter koseri (strain ATCC BAA-895 / CDC 4225-83 / SGSC4696).